The primary structure comprises 290 residues: Protease HtpX homolog (290 aa).

2 helical membrane-spanning segments follow: residues 4–24 (ILLF…VASL) and 39–59 (TALL…SLLI). Zn(2+) is bound at residue His144. Residue Glu145 is part of the active site. Residue His148 coordinates Zn(2+). 2 helical membrane passes run 159–179 (LIQG…GYAV) and 199–219 (VSTI…VAWF). Position 224 (Glu224) interacts with Zn(2+).

The protein belongs to the peptidase M48B family. It depends on Zn(2+) as a cofactor.

It is found in the cell inner membrane. This chain is Protease HtpX homolog, found in Variovorax paradoxus (strain S110).